The chain runs to 477 residues: Trigger factor (477 aa).

In terms of domain architecture, PPIase FKBP-type spans 174 to 261 (GDIAVVSFKG…LKDLKEKELP (88 aa)). The interval 435–477 (VNEKTTKTSKATKTSKTTKATKTATKTTKTTKTTKTQNKKEKK) is disordered. Residues 442–470 (TSKATKTSKTTKATKTATKTTKTTKTTKT) are compositionally biased toward low complexity.

It belongs to the FKBP-type PPIase family. Tig subfamily.

Its subcellular location is the cytoplasm. The catalysed reaction is [protein]-peptidylproline (omega=180) = [protein]-peptidylproline (omega=0). In terms of biological role, involved in protein export. Acts as a chaperone by maintaining the newly synthesized protein in an open conformation. Functions as a peptidyl-prolyl cis-trans isomerase. This is Trigger factor from Prochlorococcus marinus (strain MIT 9301).